The following is a 140-amino-acid chain: Cysteine desulfuration protein SufE (140 aa).

The active-site Cysteine persulfide intermediate is the C51.

It belongs to the SufE family. In terms of assembly, homodimer. Interacts with SufS.

It is found in the cytoplasm. It functions in the pathway cofactor biosynthesis; iron-sulfur cluster biosynthesis. Functionally, participates in cysteine desulfuration mediated by SufS. Cysteine desulfuration mobilizes sulfur from L-cysteine to yield L-alanine and constitutes an essential step in sulfur metabolism for biosynthesis of a variety of sulfur-containing biomolecules. Functions as a sulfur acceptor for SufS, by mediating the direct transfer of the sulfur atom from the S-sulfanylcysteine of SufS, an intermediate product of cysteine desulfuration process. The chain is Cysteine desulfuration protein SufE from Yersinia enterocolitica serotype O:8 / biotype 1B (strain NCTC 13174 / 8081).